A 468-amino-acid polypeptide reads, in one-letter code: UDP-N-acetylmuramate--L-alanine ligase (468 aa).

114-120 (GTHGKTT) contacts ATP.

The protein belongs to the MurCDEF family.

The protein resides in the cytoplasm. The catalysed reaction is UDP-N-acetyl-alpha-D-muramate + L-alanine + ATP = UDP-N-acetyl-alpha-D-muramoyl-L-alanine + ADP + phosphate + H(+). It functions in the pathway cell wall biogenesis; peptidoglycan biosynthesis. Functionally, cell wall formation. This is UDP-N-acetylmuramate--L-alanine ligase from Methylorubrum populi (strain ATCC BAA-705 / NCIMB 13946 / BJ001) (Methylobacterium populi).